The chain runs to 255 residues: Thiazole synthase (255 aa).

K96 serves as the catalytic Schiff-base intermediate with DXP. 1-deoxy-D-xylulose 5-phosphate-binding positions include G157, 183–184, and 205–206; these read AG and NT.

This sequence belongs to the ThiG family. As to quaternary structure, homotetramer. Forms heterodimers with either ThiH or ThiS.

Its subcellular location is the cytoplasm. It carries out the reaction [ThiS sulfur-carrier protein]-C-terminal-Gly-aminoethanethioate + 2-iminoacetate + 1-deoxy-D-xylulose 5-phosphate = [ThiS sulfur-carrier protein]-C-terminal Gly-Gly + 2-[(2R,5Z)-2-carboxy-4-methylthiazol-5(2H)-ylidene]ethyl phosphate + 2 H2O + H(+). It functions in the pathway cofactor biosynthesis; thiamine diphosphate biosynthesis. Functionally, catalyzes the rearrangement of 1-deoxy-D-xylulose 5-phosphate (DXP) to produce the thiazole phosphate moiety of thiamine. Sulfur is provided by the thiocarboxylate moiety of the carrier protein ThiS. In vitro, sulfur can be provided by H(2)S. The sequence is that of Thiazole synthase from Staphylococcus epidermidis (strain ATCC 35984 / DSM 28319 / BCRC 17069 / CCUG 31568 / BM 3577 / RP62A).